We begin with the raw amino-acid sequence, 29 residues long: Amelogenin-like protein (29 aa).

Ser-16 is modified (phosphoserine).

Belongs to the amelogenin family.

It is found in the secreted. The protein localises to the extracellular space. It localises to the extracellular matrix. Functionally, tooth enamel proteins are produced in ameloblasts and play a role in biomineralization. The chain is Amelogenin-like protein (AMEL) from Oryctolagus cuniculus (Rabbit).